Here is a 413-residue protein sequence, read N- to C-terminus: Serine hydroxymethyltransferase (413 aa).

Residues leucine 119 and 123-125 (GHL) each bind (6S)-5,6,7,8-tetrahydrofolate. Lysine 228 is modified (N6-(pyridoxal phosphate)lysine). Glutamate 243 is a binding site for (6S)-5,6,7,8-tetrahydrofolate.

This sequence belongs to the SHMT family. As to quaternary structure, homodimer. Requires pyridoxal 5'-phosphate as cofactor.

Its subcellular location is the cytoplasm. The catalysed reaction is (6R)-5,10-methylene-5,6,7,8-tetrahydrofolate + glycine + H2O = (6S)-5,6,7,8-tetrahydrofolate + L-serine. It functions in the pathway one-carbon metabolism; tetrahydrofolate interconversion. Its pathway is amino-acid biosynthesis; glycine biosynthesis; glycine from L-serine: step 1/1. Its function is as follows. Catalyzes the reversible interconversion of serine and glycine with tetrahydrofolate (THF) serving as the one-carbon carrier. This reaction serves as the major source of one-carbon groups required for the biosynthesis of purines, thymidylate, methionine, and other important biomolecules. Also exhibits THF-independent aldolase activity toward beta-hydroxyamino acids, producing glycine and aldehydes, via a retro-aldol mechanism. This is Serine hydroxymethyltransferase from Thermoanaerobacter pseudethanolicus (strain ATCC 33223 / 39E) (Clostridium thermohydrosulfuricum).